The chain runs to 102 residues: AKVEVGDEVGNFKFYPDSITVSAGEAVEFTLVGETGHNIVFDIPAGAPGTVASELKAASMDENDLLSEDEPSFKAKVSTPGTYTFYCTPHKSANMKGTLTVK.

The region spanning 1–102 (AKVEVGDEVG…ANMKGTLTVK (102 aa)) is the Plastocyanin-like domain. The Cu cation site is built by His-37, Cys-87, His-90, and Met-95.

The protein belongs to the plastocyanin family. Cu(2+) is required as a cofactor.

It is found in the plastid. The protein localises to the chloroplast thylakoid membrane. Functionally, participates in electron transfer between P700 and the cytochrome b6-f complex in photosystem I. This Dryopteris crassirhizoma (Thick stemmed wood fern) protein is Plastocyanin (PETE).